A 423-amino-acid chain; its full sequence is CinA-like protein (423 aa).

The protein belongs to the CinA family.

This Desulforapulum autotrophicum (strain ATCC 43914 / DSM 3382 / VKM B-1955 / HRM2) (Desulfobacterium autotrophicum) protein is CinA-like protein.